A 420-amino-acid chain; its full sequence is Shaggy-related protein kinase delta (420 aa).

Residues 1–61 (MESHLGNGVG…DIIDGVGAEP (61 aa)) form a disordered region. Residues 10-26 (GSSRSAKNTKNTSSSVD) are compositionally biased toward polar residues. Over residues 28 to 41 (LSRDMLEMKIRDKT) the composition is skewed to basic and acidic residues. Over residues 42-53 (EADEERDSEPDI) the composition is skewed to acidic residues. Positions 82 to 366 (YIAEHVVGTG…AVEACIHPFF (285 aa)) constitute a Protein kinase domain. Residues 88 to 96 (VGTGSFGMV) and lysine 111 contribute to the ATP site. The active-site Proton acceptor is aspartate 207. At tyrosine 242 the chain carries Phosphotyrosine.

Belongs to the protein kinase superfamily. CMGC Ser/Thr protein kinase family. GSK-3 subfamily. Post-translationally, autophosphorylated mainly on threonine and serine residues.

The enzyme catalyses L-seryl-[protein] + ATP = O-phospho-L-seryl-[protein] + ADP + H(+). The catalysed reaction is L-threonyl-[protein] + ATP = O-phospho-L-threonyl-[protein] + ADP + H(+). Functionally, may mediate extracellular signals to regulate transcription in differentiating cells. In Arabidopsis thaliana (Mouse-ear cress), this protein is Shaggy-related protein kinase delta (ASK4).